A 528-amino-acid polypeptide reads, in one-letter code: MSLQMVSAVSNSSLLQPGSSLLNFDGHVFFFGQKGWPKRSCPTGVFFLDIKQNELKMKPAAFSRDSCYLPPLRYPAICTLRGNGESDKHQYIIHGGKTPNNDLSDKIYIMSMVNKTTKKTTFQCIEKDLGGDVPEARYGHTINVVHSRGKSMIVIFGGRSYIPLAQRTTEKWNSVVDCLPSVFLVDFEFGCCTSYILPELQDGLSFHVSVARDDTIYILGGHSLQNNTRPPSLYKLKVDLPLGSPCVTCSILPGGISVSSGIVTQTGDTEFVLVGGYQSDNQKRMICNTIVLEDNKIEIVERVSPDWTPDIKHCRMWFGCDMGKGSVLLGIPGANKQLISDANYFYILRCNKAEEDEEEELTAQTCSQASTEDQGDSTPFEDSEEFSFSAEASSFDVDDIDTYNEDDEEDESETGYWIICCASCNIDINTWVPFYSTELNKPAMILCSSGSGHWVHAQCMDLSESMLLQLSEANVKYFCNEHVHLNKGLQTPKKAVHLKKQPMKRLHKKKTMKLTTPVKKSFLRRLFE.

Residues 364–383 are disordered; the sequence is QTCSQASTEDQGDSTPFEDS. Residues 373–383 show a composition bias toward acidic residues; that stretch reads DQGDSTPFEDS. The PHD-type; atypical zinc-finger motif lies at 417-485; the sequence is WIICCASCNI…KYFCNEHVHL (69 aa). Residues Cys420, Cys424, Cys447, His453, His456, Cys459, Cys479, and His482 each coordinate Zn(2+).

It belongs to the RAG2 family. In terms of assembly, component of the RAG complex composed of core components RAG1 and RAG2.

It is found in the nucleus. Core component of the RAG complex, a multiprotein complex that mediates the DNA cleavage phase during V(D)J recombination. V(D)J recombination assembles a diverse repertoire of immunoglobulin and T-cell receptor genes in developing B and T lymphocytes through rearrangement of different V (variable), in some cases D (diversity), and J (joining) gene segments. DNA cleavage by the RAG complex occurs in 2 steps: a first nick is introduced in the top strand immediately upstream of the heptamer, generating a 3'-hydroxyl group that can attack the phosphodiester bond on the opposite strand in a direct transesterification reaction, thereby creating 4 DNA ends: 2 hairpin coding ends and 2 blunt, 5'-phosphorylated ends. In the RAG complex, RAG2 is not the catalytic component but is required for all known catalytic activities mediated by RAG1. It probably acts as a sensor of chromatin state that recruits the RAG complex to H3K4me3. The chain is V(D)J recombination-activating protein 2 (RAG2) from Gallus gallus (Chicken).